The sequence spans 49 residues: IgW transmembrane form Tm2T7/Tm7T7/Tm3T3 (49 aa).

The N-linked (GlcNAc...) asparagine glycan is linked to N3. A helical membrane pass occupies residues 25-45 (VAAFAILFILSFLYSTFVTVV).

Expressed in the spleen. May also be expressed in other lymphoid tissues.

The protein resides in the membrane. The chain is IgW transmembrane form Tm2T7/Tm7T7/Tm3T3 from Heterodontus francisci (Horn shark).